The following is a 470-amino-acid chain: Pyruvate kinase I (470 aa).

Residue arginine 32 coordinates substrate. The K(+) site is built by asparagine 34, serine 36, aspartate 66, and threonine 67. Position 34-37 (34-37 (NFSH)) interacts with ATP. Residue arginine 73 coordinates ATP. N6-acetyllysine is present on lysine 76. Lysine 156 serves as a coordination point for ATP. Mg(2+) is bound at residue glutamate 222. Glycine 245, aspartate 246, and threonine 278 together coordinate substrate. Aspartate 246 lines the Mg(2+) pocket. The residue at position 319 (lysine 319) is an N6-acetyllysine.

It belongs to the pyruvate kinase family. As to quaternary structure, homotetramer. Requires Mg(2+) as cofactor. It depends on K(+) as a cofactor.

It catalyses the reaction pyruvate + ATP = phosphoenolpyruvate + ADP + H(+). It participates in carbohydrate degradation; glycolysis; pyruvate from D-glyceraldehyde 3-phosphate: step 5/5. The polypeptide is Pyruvate kinase I (pykF) (Escherichia coli O157:H7).